The primary structure comprises 806 residues: Minor extracellular protease Vpr (806 aa).

The signal sequence occupies residues 1–28 (MKKGIIRFLLVSFVLFFALSTGITGVQA). Residues 29–160 (APASSKTSAD…TISEDAVSPQ (132 aa)) constitute a propeptide that is removed on maturation. Residues 57–142 (TVIVELKEKS…AVYPNVTYKT (86 aa)) form the Inhibitor I9 domain. Positions 158-597 (SPQMDDSAPY…ARIMNAIKAD (440 aa)) constitute a Peptidase S8 domain. Catalysis depends on charge relay system residues aspartate 189 and histidine 233. In terms of domain architecture, PA spans 383-461 (ELVEAGIGEA…KLSLEDGEKL (79 aa)). The Charge relay system role is filled by serine 534.

The protein belongs to the peptidase S8 family. In terms of processing, probably undergoes C-terminal processing or proteolysis. Auto-processed to form active enzymes of several different molecular weights.

It localises to the secreted. Its subcellular location is the cell wall. Its activity is regulated as follows. Activity is inhibited by phenylmethylsulfonyl fluoride (PMSF), but not by EDTA. Serine protease. Involved in the production of the competence and sporulation stimulating factor CSF. Is directly involved in the processing of pro-CSF to CSF. Can also cleave pro-PhrA to PhrA, but cannot cleave pro-PhrE. Shows fibrinolytic activity in vitro. Not essential for growth or sporulation. This Bacillus subtilis (strain 168) protein is Minor extracellular protease Vpr.